A 548-amino-acid chain; its full sequence is Putative ATP-dependent RNA helicase R290 (548 aa).

In terms of domain architecture, Helicase ATP-binding spans 38–206 (INKVINGEDV…CKVLQLKTNE (169 aa)). 51–58 (LMTSAGKS) is an ATP binding site. Residues 150 to 153 (DEAH) carry the DEAH box motif. Residues 231–376 (DIVPIINKYP…KTQLALLEQM (146 aa)) enclose the Helicase C-terminal domain.

Belongs to the DEAD box helicase family. DEAH subfamily.

It catalyses the reaction ATP + H2O = ADP + phosphate + H(+). This chain is Putative ATP-dependent RNA helicase R290, found in Acanthamoeba polyphaga mimivirus (APMV).